The primary structure comprises 276 residues: Glutamate racemase (276 aa).

Substrate contacts are provided by residues 12–13 and 44–45; these read DS and YG. Cysteine 76 acts as the Proton donor/acceptor in catalysis. Residue 77-78 participates in substrate binding; the sequence is NT. The Proton donor/acceptor role is filled by cysteine 187. 188–189 is a substrate binding site; sequence TH.

It belongs to the aspartate/glutamate racemases family.

The catalysed reaction is L-glutamate = D-glutamate. It functions in the pathway cell wall biogenesis; peptidoglycan biosynthesis. Functionally, provides the (R)-glutamate required for cell wall biosynthesis. The polypeptide is Glutamate racemase (Granulibacter bethesdensis (strain ATCC BAA-1260 / CGDNIH1)).